The following is a 391-amino-acid chain: Ferrochelatase (391 aa).

Fe cation-binding residues include His-196 and Glu-281.

This sequence belongs to the ferrochelatase family.

The protein localises to the cytoplasm. The catalysed reaction is heme b + 2 H(+) = protoporphyrin IX + Fe(2+). It functions in the pathway porphyrin-containing compound metabolism; protoheme biosynthesis; protoheme from protoporphyrin-IX: step 1/1. Catalyzes the ferrous insertion into protoporphyrin IX. This is Ferrochelatase from Prochlorococcus marinus subsp. pastoris (strain CCMP1986 / NIES-2087 / MED4).